The chain runs to 239 residues: Ribonuclease PH (239 aa).

Phosphate contacts are provided by residues Arg86 and 124–126 (GTR).

It belongs to the RNase PH family. In terms of assembly, homohexameric ring arranged as a trimer of dimers.

It carries out the reaction tRNA(n+1) + phosphate = tRNA(n) + a ribonucleoside 5'-diphosphate. Functionally, phosphorolytic 3'-5' exoribonuclease that plays an important role in tRNA 3'-end maturation. Removes nucleotide residues following the 3'-CCA terminus of tRNAs; can also add nucleotides to the ends of RNA molecules by using nucleoside diphosphates as substrates, but this may not be physiologically important. Probably plays a role in initiation of 16S rRNA degradation (leading to ribosome degradation) during starvation. The protein is Ribonuclease PH of Rhodopseudomonas palustris (strain BisB18).